The sequence spans 723 residues: F-box protein MAX2 homolog B (723 aa).

The 54-residue stretch at 2–55 (AKTPIPFTTLNDLPDVILSNIIAAVSDTRSRNATALVCHKWLVLERSTRTSLTL) folds into the F-box domain.

As to quaternary structure, part of a putative SCF (SKP1/Cullin/F-box) ubiquitin ligase complex. Interacts with KAI2IA in the presence of (-)-germacrene D. Mainly expressed in fully expanded leaves, lateral roots, axillary and shoot apex, and, to a lower extent, in internodes and nodes.

The protein resides in the nucleus. It is found in the cytoplasm. Functionally, component of SCF(ASK-cullin-F-box) E3 ubiquitin ligase complexes, which may mediate the ubiquitination and subsequent proteasomal degradation of target proteins. Is necessary for responses to strigolactones and may be involved in the ubiquitin-mediated degradation of specific proteins that activate axillary growth. Targets probably SMAX1A to degradation upon the formation of an E3 SCF ubiquitin ligase complex (ASK-cullin-F-box) containing MAX2B and KAI2IA in response to (-)-germacrene D in the stigma. The chain is F-box protein MAX2 homolog B from Petunia hybrida (Petunia).